A 418-amino-acid polypeptide reads, in one-letter code: Glutamyl-tRNA reductase (418 aa).

Substrate contacts are provided by residues 49–52 (TCNR), Ser-109, 114–116 (EPQ), and Gln-120. Residue Cys-50 is the Nucleophile of the active site. 189-194 (GAGETI) is a binding site for NADP(+).

Belongs to the glutamyl-tRNA reductase family. In terms of assembly, homodimer.

The enzyme catalyses (S)-4-amino-5-oxopentanoate + tRNA(Glu) + NADP(+) = L-glutamyl-tRNA(Glu) + NADPH + H(+). Its pathway is porphyrin-containing compound metabolism; protoporphyrin-IX biosynthesis; 5-aminolevulinate from L-glutamyl-tRNA(Glu): step 1/2. Catalyzes the NADPH-dependent reduction of glutamyl-tRNA(Glu) to glutamate 1-semialdehyde (GSA). The chain is Glutamyl-tRNA reductase from Shigella flexneri.